We begin with the raw amino-acid sequence, 192 residues long: Iodate reductase subunit IdrB (192 aa).

The segment at residues 1-52 (MSENIIPVRAVPAHDHEHDGERACMSRRRFLLFGGTSVALLSIASLPGVAQV) is a signal peptide (tat-type signal). The Rieske domain occupies 102–173 (GADKDIVAFN…LEVQGDDIYA (72 aa)). [2Fe-2S] cluster contacts are provided by C114, H116, C135, and H138.

The protein belongs to the AOX family. As to quaternary structure, the iodate reductase (Idr) complex is composed of a molybdopterin-dependent iodate reductase (IdrA and IdrB subunits) and two associated peroxidases (IdrP1 and IdrP2). Requires [2Fe-2S] cluster as cofactor. In terms of processing, predicted to be exported by the Tat system. The position of the signal peptide cleavage has not been experimentally proven.

It localises to the periplasm. In terms of biological role, involved in iodate respiration. Probably catalyzes the reduction of iodate (IO(3)(-)) to hypoiodous acid (HIO) and H(2)O(2), using a reduced cytochrome c as the electron donor. In Pseudomonas sp. (strain SCT), this protein is Iodate reductase subunit IdrB.